Here is a 569-residue protein sequence, read N- to C-terminus: Laccase-6 (569 aa).

The signal sequence occupies residues methionine 1–alanine 29. Plastocyanin-like domains follow at residues lysine 37–serine 153 and asparagine 163–alanine 315. The N-linked (GlcNAc...) asparagine glycan is linked to asparagine 83. Histidine 87, histidine 89, histidine 132, and histidine 134 together coordinate Cu cation. Asparagine 208, asparagine 303, asparagine 319, asparagine 392, asparagine 438, and asparagine 444 each carry an N-linked (GlcNAc...) asparagine glycan. In terms of domain architecture, Plastocyanin-like 3 spans aspartate 417–lysine 553. Cu cation contacts are provided by histidine 472, histidine 475, histidine 477, histidine 532, cysteine 533, histidine 534, histidine 538, and methionine 543.

It belongs to the multicopper oxidase family. Cu cation is required as a cofactor. As to expression, predominantly expressed in the inflorescence stem, but not in siliques.

It is found in the secreted. The protein resides in the extracellular space. The protein localises to the apoplast. It carries out the reaction 4 hydroquinone + O2 = 4 benzosemiquinone + 2 H2O. In terms of biological role, lignin degradation and detoxification of lignin-derived products. The protein is Laccase-6 (LAC6) of Arabidopsis thaliana (Mouse-ear cress).